We begin with the raw amino-acid sequence, 310 residues long: Lipoyl synthase (310 aa).

Positions 54, 59, 65, 80, 84, 87, and 295 each coordinate [4Fe-4S] cluster. Residues 66–284 (FASGTATFLI…LFGEDNLGFM (219 aa)) enclose the Radical SAM core domain.

Belongs to the radical SAM superfamily. Lipoyl synthase family. [4Fe-4S] cluster is required as a cofactor.

Its subcellular location is the cytoplasm. The catalysed reaction is [[Fe-S] cluster scaffold protein carrying a second [4Fe-4S](2+) cluster] + N(6)-octanoyl-L-lysyl-[protein] + 2 oxidized [2Fe-2S]-[ferredoxin] + 2 S-adenosyl-L-methionine + 4 H(+) = [[Fe-S] cluster scaffold protein] + N(6)-[(R)-dihydrolipoyl]-L-lysyl-[protein] + 4 Fe(3+) + 2 hydrogen sulfide + 2 5'-deoxyadenosine + 2 L-methionine + 2 reduced [2Fe-2S]-[ferredoxin]. It functions in the pathway protein modification; protein lipoylation via endogenous pathway; protein N(6)-(lipoyl)lysine from octanoyl-[acyl-carrier-protein]: step 2/2. Catalyzes the radical-mediated insertion of two sulfur atoms into the C-6 and C-8 positions of the octanoyl moiety bound to the lipoyl domains of lipoate-dependent enzymes, thereby converting the octanoylated domains into lipoylated derivatives. This Prochlorococcus marinus (strain MIT 9215) protein is Lipoyl synthase.